The primary structure comprises 350 residues: GTPase Obg (350 aa).

One can recognise an Obg domain in the interval 1–159 (MRFIDQTEIF…FRLHLELKLL (159 aa)). Residues 160–328 (AEVGIIGLPN…LLQQVWEELD (169 aa)) form the OBG-type G domain. Residues 166–173 (GLPNAGKS), 191–195 (FTTLI), 213–216 (DIPG), 280–283 (NKID), and 309–311 (SAV) contribute to the GTP site. Mg(2+) is bound by residues Ser-173 and Thr-193.

This sequence belongs to the TRAFAC class OBG-HflX-like GTPase superfamily. OBG GTPase family. As to quaternary structure, monomer. It depends on Mg(2+) as a cofactor.

The protein resides in the cytoplasm. Functionally, an essential GTPase which binds GTP, GDP and possibly (p)ppGpp with moderate affinity, with high nucleotide exchange rates and a fairly low GTP hydrolysis rate. Plays a role in control of the cell cycle, stress response, ribosome biogenesis and in those bacteria that undergo differentiation, in morphogenesis control. The sequence is that of GTPase Obg from Acaryochloris marina (strain MBIC 11017).